The chain runs to 700 residues: Protein claret segregational (700 aa).

2 positions are modified to phosphoserine: Ser94 and Ser96. A disordered region spans residues 141–185 (APSSITATAVKRPPVTRPAPRAAGGAAAKKPAGTGAAASSGAAAA). Low complexity predominate over residues 149–185 (AVKRPPVTRPAPRAAGGAAAKKPAGTGAAASSGAAAA). A coiled-coil region spans residues 196–346 (KARFHDLLEK…ELHNTVMDLR (151 aa)). The Kinesin motor domain occupies 348-670 (NIRVFCRIRP…LRFAASVNSC (323 aa)). 434–441 (GQTGSGKT) provides a ligand contact to ATP. A required for minus-end directionality region spans residues 664-668 (AASVN). Residues 681-700 (LNNSVANSSTQSNNSGSFDK) form a disordered region.

Belongs to the TRAFAC class myosin-kinesin ATPase superfamily. Kinesin family. NCD subfamily.

Its subcellular location is the cytoplasm. The protein resides in the cytoskeleton. The catalysed reaction is ATP + H2O = ADP + phosphate + H(+). Minus-end-directed microtubule-based motor protein. Has ATPase activity. Required for normal chromosomal segregation in meiosis in females, and in early mitotic divisions of the embryo. This is Protein claret segregational (ncd) from Drosophila melanogaster (Fruit fly).